The following is a 264-amino-acid chain: Membrane-spanning 4-domains subfamily A member 10 (264 aa).

At 1-57 (MKAEATVIPSRCARGQTTAAPGVQPWQTSVPQNTTQPKLLAPRQHEKSQKRSSLLKE) the chain is on the cytoplasmic side. Residues 17–37 (TTAAPGVQPWQTSVPQNTTQP) are compositionally biased toward polar residues. Residues 17–48 (TTAAPGVQPWQTSVPQNTTQPKLLAPRQHEKS) form a disordered region. A helical membrane pass occupies residues 58-78 (LGAFHITIALLHLVFGGYLAS). At 79–89 (TVKSLHLVVLK) the chain is on the extracellular side. Residues 90-110 (SWYPFWGAASFLISGILAITM) form a helical membrane-spanning segment. At 111–119 (KTFSKTYLK) the chain is on the cytoplasmic side. A helical membrane pass occupies residues 120 to 140 (MLCLMTNLVSLFCVLSGLFVI). The Extracellular portion of the chain corresponds to 141-169 (SKDLFLESPFESPIWRMYPNSTVHIQRLE). A helical membrane pass occupies residues 170 to 190 (LALLCFTVLELFLPVPTAVTA). At 191-264 (WRDRPSAKND…GAGIWTQTAN (74 aa)) the chain is on the cytoplasmic side.

The protein belongs to the MS4A family.

Its subcellular location is the membrane. May be involved in signal transduction as a component of a multimeric receptor complex. The polypeptide is Membrane-spanning 4-domains subfamily A member 10 (MS4A10) (Pongo abelii (Sumatran orangutan)).